A 196-amino-acid polypeptide reads, in one-letter code: Small ribosomal subunit protein uS4c (196 aa).

A disordered region spans residues 15-42 (LGALPGLTRKTPKSGSNQKKKFNSGKKE). The S4 RNA-binding domain maps to 89-150 (MRLDNILFRL…NQRSKRLVQN (62 aa)).

Belongs to the universal ribosomal protein uS4 family. As to quaternary structure, part of the 30S ribosomal subunit. Contacts protein S5. The interaction surface between S4 and S5 is involved in control of translational fidelity.

The protein localises to the plastid. The protein resides in the chloroplast. Functionally, one of the primary rRNA binding proteins, it binds directly to 16S rRNA where it nucleates assembly of the body of the 30S subunit. Its function is as follows. With S5 and S12 plays an important role in translational accuracy. The sequence is that of Small ribosomal subunit protein uS4c (rps4) from Cenchrus longisetus (Feathertop).